The sequence spans 315 residues: Acetyl-coenzyme A carboxylase carboxyl transferase subunit alpha (315 aa).

One can recognise a CoA carboxyltransferase C-terminal domain in the interval 40 to 293 (LQDKSKTLTE…REELSSQLAM (254 aa)).

It belongs to the AccA family. Acetyl-CoA carboxylase is a heterohexamer composed of biotin carboxyl carrier protein (AccB), biotin carboxylase (AccC) and two subunits each of ACCase subunit alpha (AccA) and ACCase subunit beta (AccD).

It is found in the cytoplasm. It carries out the reaction N(6)-carboxybiotinyl-L-lysyl-[protein] + acetyl-CoA = N(6)-biotinyl-L-lysyl-[protein] + malonyl-CoA. It participates in lipid metabolism; malonyl-CoA biosynthesis; malonyl-CoA from acetyl-CoA: step 1/1. Component of the acetyl coenzyme A carboxylase (ACC) complex. First, biotin carboxylase catalyzes the carboxylation of biotin on its carrier protein (BCCP) and then the CO(2) group is transferred by the carboxyltransferase to acetyl-CoA to form malonyl-CoA. This Pseudomonas savastanoi pv. phaseolicola (strain 1448A / Race 6) (Pseudomonas syringae pv. phaseolicola (strain 1448A / Race 6)) protein is Acetyl-coenzyme A carboxylase carboxyl transferase subunit alpha.